Reading from the N-terminus, the 256-residue chain is Chorismate mutase (256 aa).

Residues 3 to 255 (FTKPETVLNL…EVEYLLRRLE (253 aa)) form the Chorismate mutase domain. Positions 75 and 76 each coordinate L-tyrosine. L-tryptophan is bound by residues Asn-138, Asn-139, Gly-141, and Ser-142. Asn-139, Gly-141, Ser-142, and Thr-145 together coordinate L-tyrosine.

In terms of assembly, homodimer.

The protein localises to the cytoplasm. It catalyses the reaction chorismate = prephenate. It functions in the pathway metabolic intermediate biosynthesis; prephenate biosynthesis; prephenate from chorismate: step 1/1. With respect to regulation, each dimer has two allosteric binding sites that can bind the regulatory effectors tryptophan or tyrosine. Can bind either one tryptophan or one tyrosine, two tryptophan or two tyrosine or one tryptophan and one tyrosine, which differentially affect the catalytic activity. Activated by tryptophan and subject to feedback inhibition by tyrosine. In the presence of both tryptophan and tyrosine, the enzyme is in the activated state. Catalyzes the Claisen rearrangement of chorismate to prephenate. Acts at the first branch point in the aromatic amino acid pathway where it steers biosynthesis towards phenylalanine and tyrosine, and away from tryptophan. The chain is Chorismate mutase from Saccharomyces cerevisiae (strain ATCC 204508 / S288c) (Baker's yeast).